We begin with the raw amino-acid sequence, 509 residues long: DNA nucleotidylexotransferase (509 aa).

The segment at 1 to 25 (MDPLCTASSGPRKKRPRQVGASMAS) is disordered. Positions 11–17 (PRKKRPR) match the Nuclear localization signal motif. The 98-residue stretch at 27–124 (PHDIKFQNLV…KPVEITGKHQ (98 aa)) folds into the BRCT domain. Residues 151–509 (SQYACQRKTT…DYIEPWERNA (359 aa)) are mediates interaction with DNTTIP2. An involved in DNA binding region spans residues 258-262 (VGLKT). A 2'-deoxyribonucleoside 5'-triphosphate-binding positions include 333–338 (GFRRGK) and 342–345 (HDVD). Residues Asp-343, Asp-345, and Asp-433 each contribute to the Mg(2+) site. 448-449 (GW) contacts a 2'-deoxyribonucleoside 5'-triphosphate.

The protein belongs to the DNA polymerase type-X family. As to quaternary structure, interacts with PRP19 and DNTTIP1. Forms a ternary complex with DNTTIP2 and core histone. Released from this complex by PCNA. Interacts with TRERF1. Requires Mg(2+) as cofactor.

The protein resides in the nucleus. It carries out the reaction DNA(n) + a 2'-deoxyribonucleoside 5'-triphosphate = DNA(n+1) + diphosphate. Template-independent DNA polymerase which catalyzes the random addition of deoxynucleoside 5'-triphosphate to the 3'-end of a DNA initiator. One of the in vivo functions of this enzyme is the addition of nucleotides at the junction (N region) of rearranged Ig heavy chain and T-cell receptor gene segments during the maturation of B- and T-cells. In Bos taurus (Bovine), this protein is DNA nucleotidylexotransferase (DNTT).